A 1029-amino-acid polypeptide reads, in one-letter code: Tyrosine-protein kinase-like otk (1029 aa).

The first 18 residues, 1-18 (MISIYGLVMALMMASVLA), serve as a signal peptide directing secretion. The Extracellular segment spans residues 19-577 (SSSRFQRVPQ…GGDGFLVTRA (559 aa)). 5 consecutive Ig-like C2-type domains span residues 21–110 (SRFQ…AKLS), 109–195 (LSVI…RVMS), 247–361 (PEDL…APIS), 364–459 (PGIL…VAIN), and 464–554 (PKFS…VQLV). N-linked (GlcNAc...) asparagine glycosylation is present at Asn35. Intrachain disulfides connect Cys42–Cys91, Cys133–Cys184, Cys272–Cys350, and Cys395–Cys443. N-linked (GlcNAc...) asparagine glycans are attached at residues Asn332, Asn413, Asn425, Asn440, Asn453, Asn508, and Asn520. Residues Cys486 and Cys538 are joined by a disulfide bond. The chain crosses the membrane as a helical span at residues 578-598 (VLITMTVALAYIVLVVGLMLW). The Cytoplasmic segment spans residues 599–1029 (CRYRRQARKA…LSKAMQSAEK (431 aa)). Disordered stretches follow at residues 613 to 675 (LSTK…KKSA) and 714 to 756 (SPSD…KTSM). A compositionally biased stretch (polar residues) spans 651-669 (KSSGDAQKSDDTACSQQSR). Ser674 carries the post-translational modification Phosphoserine. A Protein kinase; inactive domain is found at 688 to 1024 (LSELIQIGRG…QLGAALSKAM (337 aa)). Positions 716–727 (SDKDADTEKQHS) are enriched in basic and acidic residues.

This sequence belongs to the protein kinase superfamily. Tyr protein kinase family. Insulin receptor subfamily. In terms of assembly, interacts with plexA; component of a receptor complex that mediates the repulsive signaling in response to Semaphorin ligands.

Its subcellular location is the cell membrane. Functionally, acts as a calcium-dependent, homophilic cell adhesion molecule that regulates neural recognition during the development of the nervous system. Component of the repulsive Plexin signaling response to regulate motor axon guidance at the embryonic stage. Also component of a receptor complex that is required in the adult visual system to innervate the lamina layer; specific targeting of R1-R6 axons. The sequence is that of Tyrosine-protein kinase-like otk from Drosophila simulans (Fruit fly).